Reading from the N-terminus, the 554-residue chain is 7-epi-sesquithujene synthase (554 aa).

Positions 308 and 312 each coordinate Mg(2+). Substrate is bound by residues Asp308, Asp312, Arg449, and Asn452. The DDXXD motif signature appears at 308–312; it reads DDMFD. The Mg(2+) site is built by Asn452, Ser456, and Glu460.

It belongs to the terpene synthase family. In terms of assembly, monomer. Mg(2+) serves as cofactor. Requires Mn(2+) as cofactor. Highly expressed in the husk. Detected in leaf sheaths and leaves.

The protein resides in the cytoplasm. The catalysed reaction is (2E,6E)-farnesyl diphosphate = 7-epi-sesquithujene + diphosphate. It carries out the reaction (2E,6E)-farnesyl diphosphate = (1S,5S,6R)-alpha-bergamotene + diphosphate. It catalyses the reaction (2E,6E)-farnesyl diphosphate = (E)-beta-farnesene + diphosphate. The enzyme catalyses (2E,6E)-farnesyl diphosphate = (S)-beta-bisabolene + diphosphate. The catalysed reaction is (2Z,6E)-farnesyl diphosphate = (-)-beta-curcumene + diphosphate. It carries out the reaction (2E,6E)-farnesyl diphosphate = gamma-curcumene + diphosphate. It catalyses the reaction (2E,6E)-farnesyl diphosphate = sesquisabinene A + diphosphate. The protein operates within secondary metabolite biosynthesis; terpenoid biosynthesis. Its function is as follows. Sesquiterpene synthase involved in the production after herbivore attack of a blend of volatiles that attracts natural enemies of herbivores. Converts farnesyl diphosphate to (S)-beta-bisabolene and 7-epi-sesquithujene, along with a mixture of more than 20 other minor sesquiterpene olefins. Can also act in vitro as a monoterpene synthase, converting geranyl diphosphate to (S)-(-)-limonene, beta-myrcene and 11 other monoterpenes. This Zea mays (Maize) protein is 7-epi-sesquithujene synthase.